The chain runs to 391 residues: Phosphoglycerate kinase (391 aa).

Substrate-binding positions include 21-23 (DLN), Arg36, 59-62 (HLGR), Arg113, and Arg146. ATP-binding positions include Lys197, Glu319, and 345–348 (GGDT).

It belongs to the phosphoglycerate kinase family. As to quaternary structure, monomer.

The protein localises to the cytoplasm. It catalyses the reaction (2R)-3-phosphoglycerate + ATP = (2R)-3-phospho-glyceroyl phosphate + ADP. Its pathway is carbohydrate degradation; glycolysis; pyruvate from D-glyceraldehyde 3-phosphate: step 2/5. The sequence is that of Phosphoglycerate kinase from Shewanella baltica (strain OS155 / ATCC BAA-1091).